The following is a 1035-amino-acid chain: NACHT, LRR and PYD domains-containing protein 3 (1035 aa).

Residues 1 to 93 (MKMASTRCKL…YEKAKRDEPK (93 aa)) enclose the Pyrin domain. Ser-5 is modified (phosphoserine). An intrachain disulfide couples Cys-8 to Cys-108. Tyr-13 is modified (phosphotyrosine). Cys-130 carries S-palmitoyl cysteine lipidation. The interval 131 to 134 (KKKK) is required for binding to phosphatidylinositol 4-phosphate (PtdIns4P). Phosphotyrosine is present on residues Tyr-136, Tyr-140, and Tyr-143. The FISNA domain occupies 140–210 (YRKYVRSRFQ…SPIKMELLFD (71 aa)). A phosphoserine mark is found at Ser-161 and Ser-163. At Tyr-168 the chain carries Phosphotyrosine. ATP is bound at residue Thr-169. Phosphoserine is present on residues Ser-198 and Ser-201. Residues 220–536 (HTVVFQGAAG…EFFAAMYYLL (317 aa)) form the NACHT domain. Position 226–233 (226–233 (GAAGIGKT)) interacts with ATP. Phosphoserine is present on residues Ser-265 and Ser-295. Residue Lys-324 forms a Glycyl lysine isopeptide (Lys-Gly) (interchain with G-Cter in ubiquitin) linkage. Position 334 is a phosphoserine (Ser-334). Residues 355 to 359 (LEKLQ) carry the KFERQ-like motif 1 motif. Lys-430 participates in a covalent cross-link: Glycyl lysine isopeptide (Lys-Gly) (interchain with G-Cter in ubiquitin). His-522 is a binding site for ATP. The KFERQ-like motif 2 motif lies at 603–607 (QIRLE). Residue Lys-689 forms a Glycyl lysine isopeptide (Lys-Gly) (interchain with G-Cter in ubiquitin) linkage. A phosphoserine mark is found at Ser-727 and Ser-734. LRR repeat units lie at residues 741 to 761 (SLTE…RVLC), 770 to 791 (NIRR…DISL), 798 to 818 (KLVE…RLLC), 827 to 848 (NLKK…DLAS), and 855 to 875 (SLTR…AILC). The KFERQ-like motif 3 signature appears at 797-801 (QKLVE). Ser-805 is modified (phosphoserine). Residues Cys-836, Cys-837, and Cys-843 are each lipidated (S-palmitoyl cysteine). At Tyr-860 the chain carries Phosphotyrosine. Lys-877 is covalently cross-linked (Glycyl lysine isopeptide (Lys-Gly) (interchain with G-Cter in ubiquitin)). LRR repeat units lie at residues 884–905 (NLQK…ALSS), 912–932 (NLTH…KLLC), 941–962 (KLQV…DLST), and 969–990 (SLRK…MFCE). Lys-926 participates in a covalent cross-link: Glycyl lysine isopeptide (Lys-Gly) (interchain with G-Cter in ubiquitin). Residue Cys-957 is the site of S-palmitoyl cysteine attachment. A Glycyl lysine isopeptide (Lys-Gly) (interchain with G-Cter in ubiquitin) cross-link involves residue Lys-972. Residue Ser-974 is modified to Phosphoserine. The KFERQ-like motif 4 signature appears at 990–994 (EVLKQ). At Ser-1034 the chain carries Phosphoserine.

It belongs to the NLRP family. In terms of assembly, sensor component of NLRP3 inflammasomes; inflammasomes are supramolecular complexes that assemble in the cytosol in response to pathogens and other damage-associated signals and play critical roles in innate immunity and inflammation. The core of NLRP3 inflammasomes consists of a signal sensor component (NLRP3), an adapter (PYCARD/ASC), which recruits an effector pro-inflammatory caspase (CASP1 and, possibly, CASP4 and CASP5). Homodecamer; inactive NLRP3 forms homodecameric double-ring cages that hide pyrin domains within NACHT-LRR rings to avoid premature activation. Interacts (via pyrin domain) with PYCARD/ASC (via pyrin domain); interaction is direct. Interacts (via LRR repeat domain) with NEK7 (via N-terminus); the interaction is required for the formation of the complex NLRP3:PYCARD, oligomerization of PYCARD/ASC and activation of CASP1. Interacts (via LRR repeat domain) with NR4A1/Nur77 (via N-terminus); the interaction is direct, requires activation of NR4A1 by its ligands NBRE-containing dsDNA and lipopolysaccharide, and stimulates the association of NLRP3 with NEK7 for non-canonical NLRP3 inflammasome activation. Interacts with CARD8; leading to inhibit formation of the NLRP3 inflammasome. Interacts with MEFV; this interaction targets NLRP3 to degradation by autophagy, hence preventing excessive IL1B- and IL18-mediated inflammation. Interacts with EIF2AK2/PKR; this interaction requires EIF2AK2 activity, is accompanied by EIF2AK2 autophosphorylation and promotes inflammasome assembly in response to specific stimuli. Interacts with GBP5 (via DAPIN domain); this interaction promotes inflammasome assembly in response to microbial and soluble, but not crystalline, agents. Interacts with PML (isoform PML-1) (via the leucine-rich repeat (LRR) domain); PML-mediated increase in NLRP3 inflammasome activation does not depend upon this interaction. Interacts (via NACHT domain) with DHX33 (via DEAH box); NLRP3 activation in presence of cytosolic dsRNA is mediated by DHX33. Interacts (via NACHT and LRR domains) with ARRB2; this interaction is direct and inducible by polyunsaturated fatty acids (PUFAs). Interacts (via NACHT domain) with DDX3X under both LPS-primed and inflammasome-activating conditions. Interacts with IRF4 (via the LRR domain); this interaction is direct and is required for optimal IRF4 binding to IL4 promoter and efficient IL4 transactivation during differentiation of Th2 helper T-cells. Interacts with MAVS; promoting localization to mitochondria and activation of the NLRP3 inflammasome. Interacts with MARK4; promoting localization of NLRP3 to the microtubule organizing center (MTOC). Interacts with TRIM50; this interaction also promotes NLRP3 oligomerization and subsequent inflammasome activation. Interacts with IRGM; preventing NLRP3 inflammasome assembly and promoting NLRP3 degradation. Interacts (via KFERQ-like motifs) with HSPA8/HSC70; promoting NLRP3 degradation by the chaperone-mediated autophagy pathway. Interacts (via NACHT and LLR domains) with ABHD8; this interaction is enhanced in the presence of NLRP3 inflammasome inducers, such as ATP, nigericin, silica, or alum. Interaction with ABHD8 leads the recruitment of ZDHHC12, hence facilitating NLRP3 palmitoylation and degradation by the chaperone-mediated autophagy pathway (CMA), therefore attenuating NLRP3 inflammasome activation. The disulfide bond in the pyrin domain might play a role in reactive oxygen species-mediated activation. Post-translationally, phosphorylation at Ser-198 by MAPK8/JNK1 increases inflammasome activation by promoting deubiquitination by BRCC3 and NLRP3 homooligomerization. Phosphorylation at Ser-805 by CSNK1A1 prevents inflammasome activation by preventing NEK7 recruitment. Phosphorylation at Ser-5 in the pyrin domain inhibits homomultimerization of NLRP3 and activation of the NLRP3 inflammasome: dephosphorylation by protein phosphatase 2A (PP2A) promotes assembly of the NLRP3 inflammasome. Phosphorylation at Ser-295 by PKD/PRKD1 promotes NLRP3 inflammasome assembly. Phosphorylation by ERK1/MAPK3 promotes NLRP3 inflammasome assembly. Phosphorylation by BTK (at Tyr-136, Tyr-140, Tyr-143 and Tyr-168) in the region that mediates binding to phosphatidylinositol phosphate, promotes relocalization of NLRP3 and assembly of the NLRP3 inflammasome. Phosphorylation at Tyr-860 inhibits NLRP3 inflammasome assembly: dephosphorylation by PTPN22 promotes inflammasome activation. Phosphorylated by LATS1 and LATS2 at Ser-265 following palmitoylation by ZDHHC1, promoting its relocalization to the microtubule organizing center (MTOC), where NLRP3 is activated by NEK7, leading to inflammasome assembly and activation. In terms of processing, ubiquitinated; undergoes both 'Lys-48'- and 'Lys-63'-linked polyubiquitination. Ubiquitination does not lead to degradation, but inhibits inflammasome activation. Deubiquitination is catalyzed by BRCC3 and associated with NLRP3 activation and inflammasome assembly. This process can be induced by the activation of Toll-like receptors (by LPS), through a non-transcriptional pathway dependent on the mitochondrial production of reactive oxygen species, and by ATP. Ubiquitinated by TRIM31 via 'Lys-48'-linked ubiquitination, leading to its degradation by the proteasome. Ubiquitinated at Lys-689 by the SCF(FBXL2) complex, leading to its degradation by the proteasome. Ubiquitinated by TRIM35 via 'lys-48' and 'Lys-63'-linked ubiquitination leading to inhibition of NLRP3 inflammasome activation. Undergoes 'Lys-27'-linked polyubiquitination by MARCHF5, leading to NLRP3-NEK7 complex formation and NLRP3 oligomerization. Palmitoylation by ZDHHC12 promotes NLRP3 degradation by the chaperone-mediated autophagy pathway (CMA) and therefore limits NLRP3 inflammasome activation. Interaction with ZDHHC12, and hence NLRP3 palmitoylation, is greatly enhanced by ABHD8. Following palmitoylation, HSPA8/HSC70 recognizes and binds the KFERQ-like motifs on NLRP3 and promotes NLRP3 recruitment to lysosomes, where it is degraded via the chaperone-mediated autophagy pathway in a LAMP2-dependent process. Palmitoylation at Cys-836 and Cys-837 by ZDHHC5 enhances its binding to NEK7 leading to inflammasome assembly and activation. Palmitoylation at Cys-130 and Cys-957 by ZDHHC1 facilitates phosphorylation at Ser-265 by LATS1 and LATS2, promoting its relocalization to the microtubule organizing center (MTOC), where NLRP3 is activated by NEK7, leading to inflammasome assembly and activation. Depalmitoylated by ABHD17A. Post-translationally, degraded via selective autophagy following interaction with IRGM. IRGM promotes NLRP3 recruitment to autophagosome membranes, promoting its SQSTM1/p62-dependent autophagy-dependent degradation. Highly expressed in oocyte, testis, spleen, thymus and kidney.

The protein resides in the cytoplasm. The protein localises to the cytosol. It localises to the inflammasome. It is found in the cytoskeleton. Its subcellular location is the microtubule organizing center. The protein resides in the golgi apparatus membrane. The protein localises to the endoplasmic reticulum. It localises to the mitochondrion. It is found in the secreted. Its subcellular location is the nucleus. The enzyme catalyses ATP + H2O = ADP + phosphate + H(+). With respect to regulation, under resting conditions, NLRP3 binds ADP and is autoinhibited. Inactive NLRP3 forms homodecameric double-ring cages that hide pyrin domains within NACHT-LRR rings to avoid premature activation. NLRP3 activation stimuli include extracellular ATP, nigericin, reactive oxygen species, crystals of monosodium urate or cholesterol, amyloid-beta fibers, environmental or industrial particles and nanoparticles, such as asbestos, silica, aluminum salts, cytosolic dsRNA, etc. Almost all stimuli trigger intracellular K(+) efflux. These stimuli lead to membrane perturbations that induce activation of NLRP3. Upon activation, NLRP3 is transported to microtubule organizing center (MTOC), where it is unlocked by NEK7, leading to its relocalization to dispersed trans-Golgi network (dTGN) vesicle membranes and recruitment of PYCARD/ASC for the formation of an active inflammasome complex. NEK7-activated NLRP3 forms a disk-shaped inflammasome. NLRP3 and PYCARD/ASC interact via their respective pyrin domains; interaction initiates speck formation (nucleation) which greatly enhances further addition of soluble PYCARD/ASC molecules to the speck in a prion-like polymerization process. Clustered PYCARD/ASC nucleates the formation of CASP1 filaments through the interaction of their respective CARD domains, acting as a platform for CASP1 polymerization and activation. Active CASP1 then processes IL1B and IL18 precursors, leading to the release of mature cytokines in the extracellular milieu and inflammatory response. NLRP3 inflammasome assembly is inhibited by IRGM, which impedes NLRP3 oligomerization. NLRP3 inflammasome is inhibited by cyclic AMP (cAMP), which directly binds NLRP3; inhibition is relieved by calcium-sensing receptor CASR, which inhibits production of cAMP. Specifically inhibited by sulfonylurea MCC950 (also named CP-456,773, CRID3), a potent and specific small-molecule inhibitor of the NLRP3 inflammasome that acts by preventing ATP hydrolysis. Sensor component of the NLRP3 inflammasome, which mediates inflammasome activation in response to defects in membrane integrity, leading to secretion of inflammatory cytokines IL1B and IL18 and pyroptosis. In response to pathogens and other damage-associated signals that affect the integrity of membranes, initiates the formation of the inflammasome polymeric complex composed of NLRP3, CASP1 and PYCARD/ASC. Recruitment of pro-caspase-1 (proCASP1) to the NLRP3 inflammasome promotes caspase-1 (CASP1) activation, which subsequently cleaves and activates inflammatory cytokines IL1B and IL18 and gasdermin-D (GSDMD), promoting cytokine secretion and pyroptosis. Activation of NLRP3 inflammasome is also required for HMGB1 secretion; stimulating inflammatory responses. Under resting conditions, ADP-bound NLRP3 is autoinhibited. NLRP3 activation stimuli include extracellular ATP, nigericin, reactive oxygen species, crystals of monosodium urate or cholesterol, amyloid-beta fibers, environmental or industrial particles and nanoparticles, such as asbestos, silica, aluminum salts, cytosolic dsRNA, etc. Almost all stimuli trigger intracellular K(+) efflux. These stimuli lead to membrane perturbation and activation of NLRP3. Upon activation, NLRP3 is transported to microtubule organizing center (MTOC), where it is unlocked by NEK7, leading to its relocalization to dispersed trans-Golgi network (dTGN) vesicle membranes and formation of an active inflammasome complex. Associates with dTGN vesicle membranes by binding to phosphatidylinositol 4-phosphate (PtdIns4P). Shows ATPase activity. In terms of biological role, independently of inflammasome activation, regulates the differentiation of T helper 2 (Th2) cells and has a role in Th2 cell-dependent asthma and tumor growth. During Th2 differentiation, required for optimal IRF4 binding to IL4 promoter and for IRF4-dependent IL4 transcription. Binds to the consensus DNA sequence 5'-GRRGGNRGAG-3'. May also participate in the transcription of IL5, IL13, GATA3, CCR3, CCR4 and MAF. This is NACHT, LRR and PYD domains-containing protein 3 (NLRP3) from Macaca mulatta (Rhesus macaque).